We begin with the raw amino-acid sequence, 1058 residues long: Carbamoyl phosphate synthase large chain (1058 aa).

Residues 1-401 form a carboxyphosphate synthetic domain region; the sequence is MPKRKDIQKI…SLLKACRSLE (401 aa). 12 residues coordinate ATP: Arg-129, Arg-169, Gly-175, Gly-176, Arg-208, Ile-210, Glu-215, Gly-241, Ile-242, His-243, Gln-284, and Glu-298. The ATP-grasp 1 domain occupies 133–327; sequence KQLMQELDQP…IAKLAAKIAV (195 aa). 3 residues coordinate Mg(2+): Gln-284, Glu-298, and Asn-300. Gln-284, Glu-298, and Asn-300 together coordinate Mn(2+). Residues 402 to 546 form an oligomerization domain region; it reads IGVCHNEMTS…YSTYELENES (145 aa). The tract at residues 547 to 929 is carbamoyl phosphate synthetic domain; that stretch reads VQSNKESILV…ALYKAFEANN (383 aa). The region spanning 671–861 is the ATP-grasp 2 domain; the sequence is EKALKELGIP…MAQIATKLIL (191 aa). Residues Arg-707, Ser-746, Ile-748, Glu-752, Gly-777, Val-778, His-779, Ser-780, Gln-820, and Glu-832 each coordinate ATP. Residues Gln-820, Glu-832, and Asn-834 each coordinate Mg(2+). Mn(2+) is bound by residues Gln-820, Glu-832, and Asn-834. The MGS-like domain maps to 930 to 1058; that stretch reads SHLSEFGQIV…ESRCFNIEAI (129 aa). Residues 930-1058 are allosteric domain; that stretch reads SHLSEFGQIV…ESRCFNIEAI (129 aa).

Belongs to the CarB family. As to quaternary structure, composed of two chains; the small (or glutamine) chain promotes the hydrolysis of glutamine to ammonia, which is used by the large (or ammonia) chain to synthesize carbamoyl phosphate. Tetramer of heterodimers (alpha,beta)4. Requires Mg(2+) as cofactor. It depends on Mn(2+) as a cofactor.

It carries out the reaction hydrogencarbonate + L-glutamine + 2 ATP + H2O = carbamoyl phosphate + L-glutamate + 2 ADP + phosphate + 2 H(+). The catalysed reaction is hydrogencarbonate + NH4(+) + 2 ATP = carbamoyl phosphate + 2 ADP + phosphate + 2 H(+). Its pathway is amino-acid biosynthesis; L-arginine biosynthesis; carbamoyl phosphate from bicarbonate: step 1/1. It functions in the pathway pyrimidine metabolism; UMP biosynthesis via de novo pathway; (S)-dihydroorotate from bicarbonate: step 1/3. Its function is as follows. Large subunit of the glutamine-dependent carbamoyl phosphate synthetase (CPSase). CPSase catalyzes the formation of carbamoyl phosphate from the ammonia moiety of glutamine, carbonate, and phosphate donated by ATP, constituting the first step of 2 biosynthetic pathways, one leading to arginine and/or urea and the other to pyrimidine nucleotides. The large subunit (synthetase) binds the substrates ammonia (free or transferred from glutamine from the small subunit), hydrogencarbonate and ATP and carries out an ATP-coupled ligase reaction, activating hydrogencarbonate by forming carboxy phosphate which reacts with ammonia to form carbamoyl phosphate. The sequence is that of Carbamoyl phosphate synthase large chain from Streptococcus pyogenes serotype M3 (strain SSI-1).